Consider the following 241-residue polypeptide: Small ribosomal subunit protein uS2 (241 aa).

This sequence belongs to the universal ribosomal protein uS2 family.

The polypeptide is Small ribosomal subunit protein uS2 (Klebsiella pneumoniae (strain 342)).